Here is a 522-residue protein sequence, read N- to C-terminus: Protein nucleotidyltransferase YdiU (522 aa).

Positions 101, 103, 104, 123, 135, 136, 193, and 200 each coordinate ATP. Asp270 functions as the Proton acceptor in the catalytic mechanism. Asn271 and Asp280 together coordinate Mg(2+). Position 280 (Asp280) interacts with ATP.

The protein belongs to the SELO family. Requires Mg(2+) as cofactor. The cofactor is Mn(2+).

It carries out the reaction L-seryl-[protein] + ATP = 3-O-(5'-adenylyl)-L-seryl-[protein] + diphosphate. The catalysed reaction is L-threonyl-[protein] + ATP = 3-O-(5'-adenylyl)-L-threonyl-[protein] + diphosphate. The enzyme catalyses L-tyrosyl-[protein] + ATP = O-(5'-adenylyl)-L-tyrosyl-[protein] + diphosphate. It catalyses the reaction L-histidyl-[protein] + UTP = N(tele)-(5'-uridylyl)-L-histidyl-[protein] + diphosphate. It carries out the reaction L-seryl-[protein] + UTP = O-(5'-uridylyl)-L-seryl-[protein] + diphosphate. The catalysed reaction is L-tyrosyl-[protein] + UTP = O-(5'-uridylyl)-L-tyrosyl-[protein] + diphosphate. Functionally, nucleotidyltransferase involved in the post-translational modification of proteins. It can catalyze the addition of adenosine monophosphate (AMP) or uridine monophosphate (UMP) to a protein, resulting in modifications known as AMPylation and UMPylation. The chain is Protein nucleotidyltransferase YdiU from Flavobacterium johnsoniae (strain ATCC 17061 / DSM 2064 / JCM 8514 / BCRC 14874 / CCUG 350202 / NBRC 14942 / NCIMB 11054 / UW101) (Cytophaga johnsonae).